The chain runs to 150 residues: Macrodomain Ter protein (150 aa).

The protein belongs to the MatP family. In terms of assembly, homodimer.

Its subcellular location is the cytoplasm. In terms of biological role, required for spatial organization of the terminus region of the chromosome (Ter macrodomain) during the cell cycle. Prevents early segregation of duplicated Ter macrodomains during cell division. Binds specifically to matS, which is a 13 bp signature motif repeated within the Ter macrodomain. This is Macrodomain Ter protein from Escherichia coli O81 (strain ED1a).